The sequence spans 21 residues: Alpha-aminoadipic semialdehyde dehydrogenase (21 aa).

It belongs to the aldehyde dehydrogenase family. Homotetramer.

The catalysed reaction is (S)-2-amino-6-oxohexanoate + NADP(+) + H2O = L-2-aminoadipate + NADPH + 2 H(+). The enzyme catalyses (S)-2-amino-6-oxohexanoate + NAD(+) + H2O = L-2-aminoadipate + NADH + 2 H(+). This chain is Alpha-aminoadipic semialdehyde dehydrogenase (aldh7a1), found in Ctenopharyngodon idella (Grass carp).